Reading from the N-terminus, the 364-residue chain is tRNA 2-selenouridine synthase (364 aa).

One can recognise a Rhodanese domain in the interval 14-137; it reads LIADTPIIDV…LRQTAIQATI (124 aa). The active-site S-selanylcysteine intermediate is Cys97.

This sequence belongs to the SelU family. Monomer.

The enzyme catalyses 5-methylaminomethyl-2-thiouridine(34) in tRNA + selenophosphate + (2E)-geranyl diphosphate + H2O + H(+) = 5-methylaminomethyl-2-selenouridine(34) in tRNA + (2E)-thiogeraniol + phosphate + diphosphate. It catalyses the reaction 5-methylaminomethyl-2-thiouridine(34) in tRNA + (2E)-geranyl diphosphate = 5-methylaminomethyl-S-(2E)-geranyl-thiouridine(34) in tRNA + diphosphate. The catalysed reaction is 5-methylaminomethyl-S-(2E)-geranyl-thiouridine(34) in tRNA + selenophosphate + H(+) = 5-methylaminomethyl-2-(Se-phospho)selenouridine(34) in tRNA + (2E)-thiogeraniol. It carries out the reaction 5-methylaminomethyl-2-(Se-phospho)selenouridine(34) in tRNA + H2O = 5-methylaminomethyl-2-selenouridine(34) in tRNA + phosphate. Involved in the post-transcriptional modification of the uridine at the wobble position (U34) of tRNA(Lys), tRNA(Glu) and tRNA(Gln). Catalyzes the conversion of 2-thiouridine (S2U-RNA) to 2-selenouridine (Se2U-RNA). Acts in a two-step process involving geranylation of 2-thiouridine (S2U) to S-geranyl-2-thiouridine (geS2U) and subsequent selenation of the latter derivative to 2-selenouridine (Se2U) in the tRNA chain. The polypeptide is tRNA 2-selenouridine synthase (Escherichia coli O127:H6 (strain E2348/69 / EPEC)).